Here is a 245-residue protein sequence, read N- to C-terminus: 1-(5-phosphoribosyl)-5-[(5-phosphoribosylamino)methylideneamino] imidazole-4-carboxamide isomerase (245 aa).

Asp7 acts as the Proton acceptor in catalysis. The active-site Proton donor is the Asp129.

It belongs to the HisA/HisF family.

Its subcellular location is the cytoplasm. The enzyme catalyses 1-(5-phospho-beta-D-ribosyl)-5-[(5-phospho-beta-D-ribosylamino)methylideneamino]imidazole-4-carboxamide = 5-[(5-phospho-1-deoxy-D-ribulos-1-ylimino)methylamino]-1-(5-phospho-beta-D-ribosyl)imidazole-4-carboxamide. It functions in the pathway amino-acid biosynthesis; L-histidine biosynthesis; L-histidine from 5-phospho-alpha-D-ribose 1-diphosphate: step 4/9. The chain is 1-(5-phosphoribosyl)-5-[(5-phosphoribosylamino)methylideneamino] imidazole-4-carboxamide isomerase from Shigella boydii serotype 18 (strain CDC 3083-94 / BS512).